The chain runs to 347 residues: NADH-quinone oxidoreductase subunit H (347 aa).

8 helical membrane passes run 25 to 45 (ILFMVVQSLVIFLVVVIVAAM), 95 to 115 (FMFTLAPAVAMFTALASFAII), 128 to 148 (IGILFFFAMAGIAVYAVLFGG), 168 to 188 (ISYEVFLGLSLMGVVALTGSF), 200 to 220 (GWYIIPQFFGFLTFVVAGVAV), 251 to 271 (FFIGEYVNVVLISALMTCLFF), 284 to 304 (FIPPAFWFMIKTLFFMTMFIL), and 324 to 344 (VCLPVTLINLLVTAAVILIFS).

The protein belongs to the complex I subunit 1 family. NDH-1 is composed of 14 different subunits. Subunits NuoA, H, J, K, L, M, N constitute the membrane sector of the complex.

Its subcellular location is the cell inner membrane. The catalysed reaction is a quinone + NADH + 5 H(+)(in) = a quinol + NAD(+) + 4 H(+)(out). In terms of biological role, NDH-1 shuttles electrons from NADH, via FMN and iron-sulfur (Fe-S) centers, to quinones in the respiratory chain. The immediate electron acceptor for the enzyme in this species is believed to be ubiquinone. Couples the redox reaction to proton translocation (for every two electrons transferred, four hydrogen ions are translocated across the cytoplasmic membrane), and thus conserves the redox energy in a proton gradient. This subunit may bind ubiquinone. In Psychrobacter arcticus (strain DSM 17307 / VKM B-2377 / 273-4), this protein is NADH-quinone oxidoreductase subunit H.